A 241-amino-acid chain; its full sequence is 1-(5-phosphoribosyl)-5-[(5-phosphoribosylamino)methylideneamino] imidazole-4-carboxamide isomerase (241 aa).

Aspartate 8 acts as the Proton acceptor in catalysis. Catalysis depends on aspartate 129, which acts as the Proton donor.

The protein belongs to the HisA/HisF family.

Its subcellular location is the cytoplasm. The catalysed reaction is 1-(5-phospho-beta-D-ribosyl)-5-[(5-phospho-beta-D-ribosylamino)methylideneamino]imidazole-4-carboxamide = 5-[(5-phospho-1-deoxy-D-ribulos-1-ylimino)methylamino]-1-(5-phospho-beta-D-ribosyl)imidazole-4-carboxamide. Its pathway is amino-acid biosynthesis; L-histidine biosynthesis; L-histidine from 5-phospho-alpha-D-ribose 1-diphosphate: step 4/9. In Rhodospirillum rubrum (strain ATCC 11170 / ATH 1.1.1 / DSM 467 / LMG 4362 / NCIMB 8255 / S1), this protein is 1-(5-phosphoribosyl)-5-[(5-phosphoribosylamino)methylideneamino] imidazole-4-carboxamide isomerase.